The sequence spans 96 residues: MKLKPIYDKIVVKRMEEKEQKTPSGIIIPDTAKEKPQVGEVIAVGNGKVLNNGEIRPLAVNVGDKVLFNKYAGTEVELDGEKYLVMAEDEVLAIIE.

Belongs to the GroES chaperonin family. As to quaternary structure, heptamer of 7 subunits arranged in a ring. Interacts with the chaperonin GroEL.

Its subcellular location is the cytoplasm. Together with the chaperonin GroEL, plays an essential role in assisting protein folding. The GroEL-GroES system forms a nano-cage that allows encapsulation of the non-native substrate proteins and provides a physical environment optimized to promote and accelerate protein folding. GroES binds to the apical surface of the GroEL ring, thereby capping the opening of the GroEL channel. The sequence is that of Co-chaperonin GroES from Hydrogenobaculum sp. (strain Y04AAS1).